The sequence spans 53 residues: MAVKRSTRLGCNECSEINYLTFKNVKKNPEKLALNKFCSRCRKVVLHKEVKRK.

It belongs to the bacterial ribosomal protein bL33 family.

The protein is Large ribosomal subunit protein bL33A (rpmG1) of Mycoplasma genitalium (strain ATCC 33530 / DSM 19775 / NCTC 10195 / G37) (Mycoplasmoides genitalium).